Reading from the N-terminus, the 75-residue chain is OcyC3 (75 aa).

Positions 1–22 are cleaved as a signal peptide; it reads MQYKTFLVISLAYLLVADEAAA. A propeptide spanning residues 51 to 75 is cleaved from the precursor; that stretch reads EINNVFEPYHENLDLELERFLSQLQ.

As to expression, expressed by the venom gland.

It is found in the secreted. It localises to the target cell membrane. In terms of biological role, amphipathic peptide with probable antimicrobial activity. May act by disrupting the integrity of the bacterial cell membrane. The protein is OcyC3 of Opisthacanthus cayaporum (South American scorpion).